The following is a 363-amino-acid chain: NADH-quinone oxidoreductase subunit H (363 aa).

10 helical membrane-spanning segments follow: residues valine 29 to tryptophan 49, glycine 62 to phenylalanine 82, alanine 94 to valine 114, valine 127 to glycine 147, valine 166 to serine 186, phenylalanine 202 to valine 222, isoleucine 239 to leucine 257, isoleucine 264 to valine 286, leucine 293 to alanine 313, and phenylalanine 339 to isoleucine 359.

The protein belongs to the complex I subunit 1 family. As to quaternary structure, NDH-1 is composed of 14 different subunits. Subunits NuoA, H, J, K, L, M, N constitute the membrane sector of the complex.

Its subcellular location is the cell inner membrane. It carries out the reaction a quinone + NADH + 5 H(+)(in) = a quinol + NAD(+) + 4 H(+)(out). Its function is as follows. NDH-1 shuttles electrons from NADH, via FMN and iron-sulfur (Fe-S) centers, to quinones in the respiratory chain. The immediate electron acceptor for the enzyme in this species is believed to be ubiquinone. Couples the redox reaction to proton translocation (for every two electrons transferred, four hydrogen ions are translocated across the cytoplasmic membrane), and thus conserves the redox energy in a proton gradient. This subunit may bind ubiquinone. The protein is NADH-quinone oxidoreductase subunit H of Xylella fastidiosa (strain Temecula1 / ATCC 700964).